The chain runs to 156 residues: Small ribosomal subunit protein uS7 (156 aa).

This sequence belongs to the universal ribosomal protein uS7 family. In terms of assembly, part of the 30S ribosomal subunit. Contacts proteins S9 and S11.

One of the primary rRNA binding proteins, it binds directly to 16S rRNA where it nucleates assembly of the head domain of the 30S subunit. Is located at the subunit interface close to the decoding center, probably blocks exit of the E-site tRNA. The protein is Small ribosomal subunit protein uS7 of Mycobacterium leprae (strain Br4923).